Here is a 268-residue protein sequence, read N- to C-terminus: Tryptophan synthase alpha chain (268 aa).

Catalysis depends on proton acceptor residues glutamate 49 and aspartate 60.

Belongs to the TrpA family. As to quaternary structure, tetramer of two alpha and two beta chains.

The catalysed reaction is (1S,2R)-1-C-(indol-3-yl)glycerol 3-phosphate + L-serine = D-glyceraldehyde 3-phosphate + L-tryptophan + H2O. It participates in amino-acid biosynthesis; L-tryptophan biosynthesis; L-tryptophan from chorismate: step 5/5. Functionally, the alpha subunit is responsible for the aldol cleavage of indoleglycerol phosphate to indole and glyceraldehyde 3-phosphate. The polypeptide is Tryptophan synthase alpha chain (Pectobacterium atrosepticum (strain SCRI 1043 / ATCC BAA-672) (Erwinia carotovora subsp. atroseptica)).